We begin with the raw amino-acid sequence, 367 residues long: Quinolinate synthase (367 aa).

H45 and S62 together coordinate iminosuccinate. Residue C109 participates in [4Fe-4S] cluster binding. Iminosuccinate is bound by residues 140–142 (YVN) and S161. Residue C229 participates in [4Fe-4S] cluster binding. Residues 255–257 (HPE) and T272 each bind iminosuccinate. Residue C319 participates in [4Fe-4S] cluster binding.

The protein belongs to the quinolinate synthase family. Type 3 subfamily. The cofactor is [4Fe-4S] cluster.

Its subcellular location is the cytoplasm. The enzyme catalyses iminosuccinate + dihydroxyacetone phosphate = quinolinate + phosphate + 2 H2O + H(+). It participates in cofactor biosynthesis; NAD(+) biosynthesis; quinolinate from iminoaspartate: step 1/1. Catalyzes the condensation of iminoaspartate with dihydroxyacetone phosphate to form quinolinate. The polypeptide is Quinolinate synthase (Lysinibacillus sphaericus (strain C3-41)).